We begin with the raw amino-acid sequence, 427 residues long: N-formyl-4-amino-5-aminomethyl-2-methylpyrimidine deformylase (427 aa).

Histidine 91 is a binding site for Zn(2+). Aspartate 93 is an active-site residue. Aspartate 124 is a Zn(2+) binding site. Catalysis depends on glutamate 158, which acts as the Proton acceptor. Positions 159, 182, and 396 each coordinate Zn(2+).

It belongs to the peptidase M20A family. It depends on Zn(2+) as a cofactor. Co(2+) serves as cofactor.

The catalysed reaction is N-formyl-4-amino-5-aminomethyl-2-methylpyrimidine + H2O = 4-amino-5-aminomethyl-2-methylpyrimidine + formate. The protein operates within cofactor biosynthesis; thiamine diphosphate biosynthesis. In terms of biological role, catalyzes the deformylation of the formylaminopyrimidine N-formyl-4-amino-5-aminomethyl-2-methylpyrimidine (FAMP) to give the corresponding aminopyrimidine. This is N-formyl-4-amino-5-aminomethyl-2-methylpyrimidine deformylase from Halalkalibacterium halodurans (strain ATCC BAA-125 / DSM 18197 / FERM 7344 / JCM 9153 / C-125) (Bacillus halodurans).